Reading from the N-terminus, the 173-residue chain is Protein-export protein SecB (173 aa).

Residues Gln148–Gln173 are disordered. Residues Thr158 to Pro167 are compositionally biased toward polar residues.

The protein belongs to the SecB family. Homotetramer, a dimer of dimers. One homotetramer interacts with 1 SecA dimer.

It is found in the cytoplasm. Functionally, one of the proteins required for the normal export of preproteins out of the cell cytoplasm. It is a molecular chaperone that binds to a subset of precursor proteins, maintaining them in a translocation-competent state. It also specifically binds to its receptor SecA. In Halorhodospira halophila (strain DSM 244 / SL1) (Ectothiorhodospira halophila (strain DSM 244 / SL1)), this protein is Protein-export protein SecB.